Consider the following 155-residue polypeptide: Large-conductance mechanosensitive channel (155 aa).

The next 3 membrane-spanning stretches (helical) occupy residues valine 16–leucine 36, valine 40–isoleucine 60, and glycine 88–valine 108.

Belongs to the MscL family. Homopentamer.

The protein resides in the cell inner membrane. Channel that opens in response to stretch forces in the membrane lipid bilayer. May participate in the regulation of osmotic pressure changes within the cell. This chain is Large-conductance mechanosensitive channel, found in Chlorobium chlorochromatii (strain CaD3).